The sequence spans 298 residues: Tyrosine recombinase XerC (298 aa).

The region spanning 2–88 is the Core-binding (CB) domain; it reads TDLHTDVERY…ALRSFFDWLV (87 aa). Residues 109-288 enclose the Tyr recombinase domain; it reads HLPKNIDVDD…DFQHLASVYD (180 aa). Catalysis depends on residues Arg148, Lys172, His240, Arg243, and His266. Residue Tyr275 is the O-(3'-phospho-DNA)-tyrosine intermediate of the active site.

It belongs to the 'phage' integrase family. XerC subfamily. In terms of assembly, forms a cyclic heterotetrameric complex composed of two molecules of XerC and two molecules of XerD, in which XerC interacts with XerD via its C-terminal region, XerD interacts with XerC via its C-terminal region and so on.

Its subcellular location is the cytoplasm. With respect to regulation, ftsK may regulate the catalytic switch between XerC and XerD in the heterotetrameric complex during the two steps of the recombination process. In terms of biological role, site-specific tyrosine recombinase, which acts by catalyzing the cutting and rejoining of the recombining DNA molecules. Binds cooperatively to specific DNA consensus sequences that are separated from XerD binding sites by a short central region, forming the heterotetrameric XerC-XerD complex that recombines DNA substrates. The complex is essential to convert dimers of the bacterial chromosome into monomers to permit their segregation at cell division. It also contributes to the segregational stability of plasmids. In the complex XerC specifically exchanges the top DNA strands. The chain is Tyrosine recombinase XerC from Escherichia coli O45:K1 (strain S88 / ExPEC).